A 222-amino-acid chain; its full sequence is Ribosomal RNA small subunit methyltransferase G (222 aa).

S-adenosyl-L-methionine-binding positions include Gly-84, Phe-89, 141-142 (VE), and Arg-154.

The protein belongs to the methyltransferase superfamily. RNA methyltransferase RsmG family.

It localises to the cytoplasm. It carries out the reaction guanosine(527) in 16S rRNA + S-adenosyl-L-methionine = N(7)-methylguanosine(527) in 16S rRNA + S-adenosyl-L-homocysteine. In terms of biological role, specifically methylates the N7 position of guanine in position 527 of 16S rRNA. In Bradyrhizobium sp. (strain BTAi1 / ATCC BAA-1182), this protein is Ribosomal RNA small subunit methyltransferase G.